The chain runs to 532 residues: Intercellular adhesion molecule 1 (532 aa).

The signal sequence occupies residues 1–27 (MAPSSPRPALPALLVLLGALFPGPGNA). Residues 28–480 (QTSVSPPKVI…TVNVLSPRYE (453 aa)) are Extracellular-facing. 2 consecutive Ig-like C2-type domains span residues 41–103 (GGSV…QSTA) and 128–193 (GKDL…LDLR). 3 disulfides stabilise this stretch: Cys-48–Cys-92, Cys-52–Cys-96, and Cys-135–Cys-186. A glycan (N-linked (GlcNAc...) asparagine) is linked at Asn-145. Residues 152–154 (RGE) carry the Cell attachment site; atypical motif. N-linked (GlcNAc...) asparagine glycosylation is found at Asn-183, Asn-202, Asn-267, and Asn-296. Ig-like C2-type domains lie at 230 to 297 (DTQG…LGNQ) and 325 to 378 (GTEV…LEVA). Cys-237 and Cys-290 are disulfide-bonded. An intrachain disulfide couples Cys-332 to Cys-371. 2 N-linked (GlcNAc...) asparagine glycosylation sites follow: Asn-385 and Asn-406. Disulfide bonds link Cys-403/Cys-419, Cys-419/Cys-457, and Cys-431/Cys-457. The Ig-like C2-type 5 domain maps to 412 to 464 (NSQQTPMCQASGNPLPELKCLKDGTFPLPVGESVTVTRDLEGTYLCRARSTQG). Residues 481-503 (IVIITVVAAAVIMGTAGLSTYLY) traverse the membrane as a helical segment. Topologically, residues 504-532 (NRQRKIRKYRLQQAQKGTPMKPNTQATPP) are cytoplasmic. Thr-521 and Thr-530 each carry phosphothreonine.

This sequence belongs to the immunoglobulin superfamily. ICAM family. In terms of assembly, homodimer. Interacts with MUC1 and promotes cell aggregation in epithelial cells. Interacts with ARHGEF26/SGEF. Interacts (on T cell side) with CD81, CD247 and CD9 at immunological synapses between antigen-presenting cells and T cells. In terms of processing, monoubiquitinated, which is promoted by MARCH9 and leads to endocytosis.

Its subcellular location is the membrane. Functionally, ICAM proteins are ligands for the leukocyte adhesion protein LFA-1 (integrin alpha-L/beta-2). During leukocyte trans-endothelial migration, ICAM1 engagement promotes the assembly of endothelial apical cups through ARHGEF26/SGEF and RHOG activation. This chain is Intercellular adhesion molecule 1 (ICAM1), found in Pan troglodytes (Chimpanzee).